Here is a 259-residue protein sequence, read N- to C-terminus: AA9 family lytic polysaccharide monooxygenase E (259 aa).

The N-terminal stretch at 1–20 (MKATVLAGLAAVIAAQGVAG) is a signal peptide. Residues His21 and His99 each coordinate Cu(2+). Cys69 and Cys193 are joined by a disulfide. Residues His179 and Gln188 each contribute to the O2 site. Tyr190 is a binding site for Cu(2+).

The protein belongs to the polysaccharide monooxygenase AA9 family. It depends on Cu(2+) as a cofactor.

The protein resides in the secreted. It carries out the reaction [(1-&gt;4)-beta-D-glucosyl]n+m + reduced acceptor + O2 = 4-dehydro-beta-D-glucosyl-[(1-&gt;4)-beta-D-glucosyl]n-1 + [(1-&gt;4)-beta-D-glucosyl]m + acceptor + H2O.. Functionally, lytic polysaccharide monooxygenase (LPMO) that depolymerizes crystalline and amorphous polysaccharides via the oxidation of scissile alpha- or beta-(1-4)-glycosidic bonds, yielding C1 or C4 oxidation products. Catalysis by LPMOs requires the reduction of the active-site copper from Cu(II) to Cu(I) by a reducing agent and H(2)O(2) or O(2) as a cosubstrate. This chain is AA9 family lytic polysaccharide monooxygenase E, found in Malbranchea cinnamomea (Thermophilic fungus).